A 184-amino-acid polypeptide reads, in one-letter code: UPF0398 protein BCB4264_A1614 (184 aa).

It belongs to the UPF0398 family.

The polypeptide is UPF0398 protein BCB4264_A1614 (Bacillus cereus (strain B4264)).